Consider the following 982-residue polypeptide: Polyribonucleotide nucleotidyltransferase 2, mitochondrial (982 aa).

A mitochondrion-targeting transit peptide spans 1-39 (MSMAVASLRLLARGGRRRARFPAPLSVPGGRAAFLSGAA). Positions 624–678 (PRLATLSFSSDSLRKLLFHRKKIEQETGARVSVSDGTVTIVAKTQPIMDKAIEKV) constitute a KH domain. The S1 motif 1 domain maps to 689–757 (GRTYKGVVSS…LRGNIKLSLK (69 aa)). 2 disordered regions span residues 792-814 (PSKDANAEPSISKDEDNMIEETP) and 832-892 (QDVT…NDVL). 2 stretches are compositionally biased toward low complexity: residues 846-855 (AKSSPKLSKP) and 868-877 (KKTSGASTTA). The S1 motif 2 domain maps to 920 to 982 (GDVVTAKVYQ…KGIPVFSLLD (63 aa)).

This sequence belongs to the polyribonucleotide nucleotidyltransferase family.

It localises to the mitochondrion. It carries out the reaction RNA(n+1) + phosphate = RNA(n) + a ribonucleoside 5'-diphosphate. In terms of biological role, involved in the 3'-end maturation of mitochondrial mRNAs, rRNAs and tRNAs. Functions as a poly(A) mRNA 3'-5' degrading phosphorylase. The sequence is that of Polyribonucleotide nucleotidyltransferase 2, mitochondrial (PNP2) from Oryza sativa subsp. japonica (Rice).